The primary structure comprises 631 residues: 1-deoxy-D-xylulose-5-phosphate synthase (631 aa).

The interval 1 to 21 is disordered; sequence MPTTFHEIPRERPLTPLLDSA. Thiamine diphosphate contacts are provided by residues His87 and 128–130; that span reads GHS. Mg(2+) is bound at residue Asp159. Thiamine diphosphate-binding positions include 160-161, Asn188, Phe295, and Glu377; that span reads GA. Asn188 contacts Mg(2+).

The protein belongs to the transketolase family. DXPS subfamily. Homodimer. The cofactor is Mg(2+). It depends on thiamine diphosphate as a cofactor.

It carries out the reaction D-glyceraldehyde 3-phosphate + pyruvate + H(+) = 1-deoxy-D-xylulose 5-phosphate + CO2. It participates in metabolic intermediate biosynthesis; 1-deoxy-D-xylulose 5-phosphate biosynthesis; 1-deoxy-D-xylulose 5-phosphate from D-glyceraldehyde 3-phosphate and pyruvate: step 1/1. In terms of biological role, catalyzes the acyloin condensation reaction between C atoms 2 and 3 of pyruvate and glyceraldehyde 3-phosphate to yield 1-deoxy-D-xylulose-5-phosphate (DXP). The polypeptide is 1-deoxy-D-xylulose-5-phosphate synthase (Ectopseudomonas mendocina (strain ymp) (Pseudomonas mendocina)).